The chain runs to 327 residues: Gamma-resorcylate decarboxylase (327 aa).

E8, H10, H164, and D287 together coordinate Zn(2+). The active site involves D287.

Belongs to the metallo-dependent hydrolases superfamily. ACMSD family. In terms of assembly, homotetramer. Zn(2+) serves as cofactor.

The catalysed reaction is 2,6-dihydroxybenzoate + H(+) = resorcinol + CO2. It catalyses the reaction 2,3-dihydroxybenzoate + H(+) = catechol + CO2. Its pathway is aromatic compound metabolism. Insensitive to oxygen. Decarboxylation and carboxylation are inhibited by AgNO(3) and by diethyl pyrocarbonate, a histidine residue-specific inhibitor. Decarboxylation is also inhibited by HgCl(2) and activated by MgCl(2). Functionally, involved in the gamma-resorcylate (2,6-dihydroxybenzoate) catabolism. Catalyzes the reversible decarboxylation of gamma-resorcylate to resorcinol. Also catalyzes the decarboxylation of 2,3-dihydroxybenzoate to catechol, but does not act on 2-hydroxybenzoic acid 3-hydroxybenzoic acid, 4-hydroxybenzoic acid, 3,4-dihydroxybenzoic acid, 2,5-dihydroxybenzoic acid, 2,3,4-trihydroxybenzoic acid, 3,4,5-trihydroxybenzoic acid, 4-aminobenzoic acid, o-hydroxyphenylacetic acid and vanillic acid. Resorcinol and catechol can both be carboxylated by the reverse reaction. The protein is Gamma-resorcylate decarboxylase of Rhizobium radiobacter (Agrobacterium tumefaciens).